Consider the following 101-residue polypeptide: Large ribosomal subunit protein eL21 (101 aa).

Residues 1-18 are compositionally biased toward basic residues; the sequence is MVKHSRGYRTRSRSLLRK. The tract at residues 1–23 is disordered; that stretch reads MVKHSRGYRTRSRSLLRKSPRER.

It belongs to the eukaryotic ribosomal protein eL21 family.

This is Large ribosomal subunit protein eL21 from Saccharolobus islandicus (strain Y.G.57.14 / Yellowstone #1) (Sulfolobus islandicus).